Consider the following 455-residue polypeptide: Bifunctional protein GlmU (455 aa).

The pyrophosphorylase stretch occupies residues 1–225 (MNIVILAAGL…EWETLGVNSK (225 aa)). Residues 6–9 (LAAG), Lys20, Gln71, 76–77 (GT), 98–100 (YGD), Gly135, Glu150, Asn165, and Asn223 contribute to the UDP-N-acetyl-alpha-D-glucosamine site. Asp100 provides a ligand contact to Mg(2+). Asn223 provides a ligand contact to Mg(2+). Residues 226–246 (VQLAELERIHQRNLAQQLLED) are linker. The interval 247-455 (GVTLIDPARI…QRPVKQKKDA (209 aa)) is N-acetyltransferase. The UDP-N-acetyl-alpha-D-glucosamine site is built by Arg329 and Lys347. His359 acts as the Proton acceptor in catalysis. Residues Tyr362 and Asn373 each coordinate UDP-N-acetyl-alpha-D-glucosamine. Acetyl-CoA-binding positions include Ala376, 382-383 (NY), Ser401, Ala419, and Arg436.

It in the N-terminal section; belongs to the N-acetylglucosamine-1-phosphate uridyltransferase family. In the C-terminal section; belongs to the transferase hexapeptide repeat family. Homotrimer. The cofactor is Mg(2+).

Its subcellular location is the cytoplasm. The catalysed reaction is alpha-D-glucosamine 1-phosphate + acetyl-CoA = N-acetyl-alpha-D-glucosamine 1-phosphate + CoA + H(+). It catalyses the reaction N-acetyl-alpha-D-glucosamine 1-phosphate + UTP + H(+) = UDP-N-acetyl-alpha-D-glucosamine + diphosphate. It participates in nucleotide-sugar biosynthesis; UDP-N-acetyl-alpha-D-glucosamine biosynthesis; N-acetyl-alpha-D-glucosamine 1-phosphate from alpha-D-glucosamine 6-phosphate (route II): step 2/2. The protein operates within nucleotide-sugar biosynthesis; UDP-N-acetyl-alpha-D-glucosamine biosynthesis; UDP-N-acetyl-alpha-D-glucosamine from N-acetyl-alpha-D-glucosamine 1-phosphate: step 1/1. Its pathway is bacterial outer membrane biogenesis; LPS lipid A biosynthesis. In terms of biological role, catalyzes the last two sequential reactions in the de novo biosynthetic pathway for UDP-N-acetylglucosamine (UDP-GlcNAc). The C-terminal domain catalyzes the transfer of acetyl group from acetyl coenzyme A to glucosamine-1-phosphate (GlcN-1-P) to produce N-acetylglucosamine-1-phosphate (GlcNAc-1-P), which is converted into UDP-GlcNAc by the transfer of uridine 5-monophosphate (from uridine 5-triphosphate), a reaction catalyzed by the N-terminal domain. In Ralstonia nicotianae (strain ATCC BAA-1114 / GMI1000) (Ralstonia solanacearum), this protein is Bifunctional protein GlmU.